The following is a 215-amino-acid chain: Octanoyltransferase (215 aa).

The region spanning 31–206 (PDSQDEIWLV…QLVKHLDYAE (176 aa)) is the BPL/LPL catalytic domain. Substrate-binding positions include 70-77 (RGGQVTYH), 137-139 (SLG), and 150-152 (GLA). The active-site Acyl-thioester intermediate is Cys168.

This sequence belongs to the LipB family.

Its subcellular location is the cytoplasm. It catalyses the reaction octanoyl-[ACP] + L-lysyl-[protein] = N(6)-octanoyl-L-lysyl-[protein] + holo-[ACP] + H(+). Its pathway is protein modification; protein lipoylation via endogenous pathway; protein N(6)-(lipoyl)lysine from octanoyl-[acyl-carrier-protein]: step 1/2. Functionally, catalyzes the transfer of endogenously produced octanoic acid from octanoyl-acyl-carrier-protein onto the lipoyl domains of lipoate-dependent enzymes. Lipoyl-ACP can also act as a substrate although octanoyl-ACP is likely to be the physiological substrate. The protein is Octanoyltransferase of Pseudomonas putida (strain W619).